The following is a 391-amino-acid chain: 3-ketoacyl-CoA thiolase (391 aa).

The Acyl-thioester intermediate role is filled by Cys95. Residues His347 and Cys377 each act as proton acceptor in the active site.

The protein belongs to the thiolase-like superfamily. Thiolase family. As to quaternary structure, heterotetramer of two alpha chains (FadB) and two beta chains (FadA).

It localises to the cytoplasm. It carries out the reaction an acyl-CoA + acetyl-CoA = a 3-oxoacyl-CoA + CoA. It functions in the pathway lipid metabolism; fatty acid beta-oxidation. Its function is as follows. Catalyzes the final step of fatty acid oxidation in which acetyl-CoA is released and the CoA ester of a fatty acid two carbons shorter is formed. This chain is 3-ketoacyl-CoA thiolase, found in Pseudomonas syringae pv. tomato (strain ATCC BAA-871 / DC3000).